The primary structure comprises 539 residues: Tyrosine-protein kinase csk-1 (539 aa).

The 68-residue stretch at 43–110 folds into the SH3 domain; that stretch reads SPGNDVIVTR…HADCVVRING (68 aa). The interval 129 to 148 is disordered; sequence PGAASTTSSTSSHHSTAANH. Residues 131–146 show a composition bias toward low complexity; the sequence is AASTTSSTSSHHSTAA. Residues 151 to 241 enclose the SH2 domain; sequence WFHSMISREN…GLCHRLVTPI (91 aa). Positions 283–535 constitute a Protein kinase domain; the sequence is IDVGDTIGHG…GQVLQRLTTI (253 aa). ATP contacts are provided by residues 289-297 and K310; that span reads IGHGEFGDV. The Proton acceptor role is filled by D403.

Belongs to the protein kinase superfamily. Tyr protein kinase family. CSK subfamily. Mg(2+) is required as a cofactor. It depends on Mn(2+) as a cofactor. In terms of tissue distribution, expressed predominantly in pharyngeal muscles in procorpus, metacorpus and terminal bulb. Expressed also in some neurons (ASE, ADF, AVA, AUA, RMDV and BAG) in the head region, anchor cell, vulva, cells around anus, body wall muscle and gondal distal tip cells.

The catalysed reaction is L-tyrosyl-[protein] + ATP = O-phospho-L-tyrosyl-[protein] + ADP + H(+). Non-receptor tyrosine-protein kinase which plays a role in pharynx function by regulating pumping and the orientation of pharyngeal muscle fibers, independently of src-1 and src-2. May phosphorylate and thereby negatively regulate src-1 and src-2 activities. This chain is Tyrosine-protein kinase csk-1, found in Caenorhabditis elegans.